A 319-amino-acid polypeptide reads, in one-letter code: Acetyl esterase (319 aa).

The Involved in the stabilization of the negatively charged intermediate by the formation of the oxyanion hole signature appears at histidine 91–glycine 93. Residues serine 165, aspartate 262, and histidine 292 contribute to the active site.

It belongs to the 'GDXG' lipolytic enzyme family. In terms of assembly, homodimer. Interacts with MalT and MelA.

Its subcellular location is the cytoplasm. Functionally, displays esterase activity towards short chain fatty esters (acyl chain length of up to 8 carbons). Able to hydrolyze triacetylglycerol (triacetin) and tributyrylglycerol (tributyrin), but not trioleylglycerol (triolein) or cholesterol oleate. Negatively regulates MalT activity by antagonizing maltotriose binding. Inhibits MelA galactosidase activity. This is Acetyl esterase from Escherichia coli O139:H28 (strain E24377A / ETEC).